The primary structure comprises 316 residues: Pseudouridine-5'-phosphate glycosidase (316 aa).

The active-site Proton donor is the Glu-31. The substrate site is built by Lys-92 and Val-112. Asp-144 lines the Mn(2+) pocket. 146 to 148 (SAD) is a substrate binding site. Catalysis depends on Lys-165, which acts as the Nucleophile.

This sequence belongs to the pseudouridine-5'-phosphate glycosidase family. In terms of assembly, homotrimer. It depends on Mn(2+) as a cofactor.

It carries out the reaction D-ribose 5-phosphate + uracil = psi-UMP + H2O. Catalyzes the reversible cleavage of pseudouridine 5'-phosphate (PsiMP) to ribose 5-phosphate and uracil. Functions biologically in the cleavage direction, as part of a pseudouridine degradation pathway. Part of an operon that could be involved in the biosynthesis of the blue pigment indigoidine, which is implicated in pathogenicity and protection from oxidative stress. This Dickeya dadantii (strain 3937) (Erwinia chrysanthemi (strain 3937)) protein is Pseudouridine-5'-phosphate glycosidase.